We begin with the raw amino-acid sequence, 136 residues long: Pilotin AspS 2 (136 aa).

The signal sequence occupies residues Met-1–Gly-24. A lipid anchor (N-palmitoyl cysteine) is attached at Cys-25. The S-diacylglycerol cysteine moiety is linked to residue Cys-25. Cys-94 and Cys-131 are joined by a disulfide.

This sequence belongs to the GspS/AspS pilotin family. In terms of assembly, cryo-electron microscopy shows that the complex forms a cylindrical channel with 15 GspD2 subunits, each of which interacts with its surrounding AspS2 (GspS-beta).

The protein resides in the cell outer membrane. Its function is as follows. Part of a type II secretion system (T2SS, formerly general secretion pathway, GSP) for the export of folded proteins across the outer membrane. Required for correct assembly of the type II secretion system-beta (T2SS-beta), for localization of GspD-beta to the cell outer membrane and for export of a labile enterotoxin by T2SS-beta. Each AspS2 binds to 2 GspD2 subunits and may clamp the monomers together, stabilizing structure and accelerating its assembly. The protein is Pilotin AspS 2 of Escherichia coli O78:H11 (strain H10407 / ETEC).